Reading from the N-terminus, the 382-residue chain is MSKSDYYDLLGLSKNATPEEIKKAYRKMALKYHPDKNPGDKAAEEKFKELSEAYDVLIDKDKRAAYDRYGHSAFSDGSGRGGFDFNSGFSTDFSDIFNDLFGGGFRGGRSSSKRQDGGTVGSDLRLDIEITLEDSFNGTKVPINYVTHVKCSSCSGSGSEGSVKSVQCNTCHGAGNIRTQQGFFTIERTCHVCNGEGEIIKNKCKKCSGSGRVRDEVNLLVTVPKGIESGDKIRLNGKGEAGYRGAQSGDLYVYPNIKKHKFFTRNGADLYCNVPIKMILATLGGHIEMPSIDGTWTKVKVPEGSQNGDKLRLKEKGMPVINSSRRGDMYIQITVETPINLTKQQKELLKKFDEEPNTVECNPQSTGFFQKVKSFWNDIRSS.

The region spanning aspartate 5 to glycine 70 is the J domain. A CR-type zinc finger spans residues glycine 138–glutamate 216. Residues cysteine 151, cysteine 154, cysteine 168, cysteine 171, cysteine 190, cysteine 193, cysteine 204, and cysteine 207 each contribute to the Zn(2+) site. CXXCXGXG motif repeat units lie at residues cysteine 151–glycine 158, cysteine 168–glycine 175, cysteine 190–glycine 197, and cysteine 204–glycine 211.

The protein belongs to the DnaJ family. In terms of assembly, homodimer. The cofactor is Zn(2+).

It is found in the cytoplasm. Functionally, participates actively in the response to hyperosmotic and heat shock by preventing the aggregation of stress-denatured proteins and by disaggregating proteins, also in an autonomous, DnaK-independent fashion. Unfolded proteins bind initially to DnaJ; upon interaction with the DnaJ-bound protein, DnaK hydrolyzes its bound ATP, resulting in the formation of a stable complex. GrpE releases ADP from DnaK; ATP binding to DnaK triggers the release of the substrate protein, thus completing the reaction cycle. Several rounds of ATP-dependent interactions between DnaJ, DnaK and GrpE are required for fully efficient folding. Also involved, together with DnaK and GrpE, in the DNA replication of plasmids through activation of initiation proteins. This Ehrlichia ruminantium (strain Welgevonden) protein is Chaperone protein DnaJ.